We begin with the raw amino-acid sequence, 290 residues long: Pantothenate synthetase (290 aa).

Position 30–37 (30–37) interacts with ATP; sequence MGALHEGH. Residue His-37 is the Proton donor of the active site. (R)-pantoate is bound at residue Gln-61. Beta-alanine is bound at residue Gln-61. Residue 147–150 participates in ATP binding; it reads GEKD. Gln-153 is a (R)-pantoate binding site. ATP contacts are provided by residues Val-176 and 184–187; that span reads KSSR.

It belongs to the pantothenate synthetase family. As to quaternary structure, homodimer.

The protein resides in the cytoplasm. It catalyses the reaction (R)-pantoate + beta-alanine + ATP = (R)-pantothenate + AMP + diphosphate + H(+). It functions in the pathway cofactor biosynthesis; (R)-pantothenate biosynthesis; (R)-pantothenate from (R)-pantoate and beta-alanine: step 1/1. Its function is as follows. Catalyzes the condensation of pantoate with beta-alanine in an ATP-dependent reaction via a pantoyl-adenylate intermediate. This chain is Pantothenate synthetase, found in Chlorobium chlorochromatii (strain CaD3).